The chain runs to 86 residues: Small ribosomal subunit protein uS17 (86 aa).

The protein belongs to the universal ribosomal protein uS17 family. As to quaternary structure, part of the 30S ribosomal subunit.

One of the primary rRNA binding proteins, it binds specifically to the 5'-end of 16S ribosomal RNA. In Desulfitobacterium hafniense (strain DSM 10664 / DCB-2), this protein is Small ribosomal subunit protein uS17.